The primary structure comprises 432 residues: Mannose-6-phosphate isomerase 1 (432 aa).

Residue M1 is modified to N-acetylmethionine. The Zn(2+) site is built by Q124, H126, E151, and H288. R307 is a catalytic residue.

This sequence belongs to the mannose-6-phosphate isomerase type 1 family. The cofactor is Zn(2+). In terms of tissue distribution, constitutively expressed in both vegetative and reproductive organs under normal growth conditions (at protein level).

The catalysed reaction is D-mannose 6-phosphate = D-fructose 6-phosphate. It functions in the pathway nucleotide-sugar biosynthesis; GDP-alpha-D-mannose biosynthesis; alpha-D-mannose 1-phosphate from D-fructose 6-phosphate: step 1/2. Its activity is regulated as follows. Inhibited by EDTA, Zn(2+), Cd(2+), Co(2+), p-chloromercuribenzoate and L-ascorbic acid (AsA). In terms of biological role, phosphomannose isomerase involved in the synthesis of the GDP-mannose and dolichol-phosphate-mannose required for a number of critical mannosyl transfer reactions. Involved in the ascorbic acid (AsA) biosynthesis. Required during the endosperm development. This Arabidopsis thaliana (Mouse-ear cress) protein is Mannose-6-phosphate isomerase 1 (PMI1).